Reading from the N-terminus, the 208-residue chain is FMRFamide-like neuropeptide 18 (208 aa).

An N-terminal signal peptide occupies residues 1–21; it reads MQRWSGVLLISLCCLLRGALA. The propeptide occupies 22 to 83; that stretch reads YTEPIYEIVE…VWEKRESSVQ (62 aa). Phenylalanine 93 is subject to Phenylalanine amide. A propeptide spanning residues 97–101 is cleaved from the precursor; sequence AYFDE. Residue phenylalanine 111 is modified to Phenylalanine amide. The propeptide occupies 115-119; sequence SYFDE. Phenylalanine 129 is modified (phenylalanine amide). A propeptide spanning residues 133-137 is cleaved from the precursor; sequence DVPMD. Phenylalanine 147 is subject to Phenylalanine amide. A propeptide spanning residues 151-158 is cleaved from the precursor; that stretch reads DYMADSFD. Phenylalanine 169 and phenylalanine 180 each carry phenylalanine amide. A propeptide spanning residues 184–195 is cleaved from the precursor; sequence SDLEEHYAGVLL. Position 205 is a phenylalanine amide (phenylalanine 205).

The protein belongs to the FARP (FMRFamide related peptide) family. May be processed by convertase egl-3. As to expression, expressed in head neurons and weakly in ventral nerve cord. Expressed in the interneurons AVA, AIY and RIG, the motor neuron RIM and the pharyngeal neurons M2 and M3. EMPGVLRF-amide: Expressed in cholinergic pharyngeal motoneurons M2 and M3.

It is found in the secreted. Its function is as follows. FMRFamide-like neuropeptides. Ligand to G-protein coupled receptor npr-1. Involved in modulating locomotion quiescence during the sleep-like state called lethargus which occurs during molting between larval and adult stages, acting via npr-1. Together with flp-1, plays a homeostatic role by acting on the GABAergic neural transmission at neuromuscular junctions to prevent overexcitation of the locomotor circuit. Plays a role in the navigational capacity of sperm and the targeting of sperm derived from males to the fertilization site in the uterus of hermaphrodites. Functionally, SVPGVLRF-amide: Excites muscle tension. Activates the G-protein coupled receptor npr-1 more effectively than other flp-18 peptides. Inhibits the activity of dissected pharyngeal myogenic muscle system. The protein is FMRFamide-like neuropeptide 18 of Caenorhabditis elegans.